The following is a 1238-amino-acid chain: Cullin-associated NEDD8-dissociated protein 1 (1238 aa).

HEAT repeat units lie at residues 41–78, 126–167, 171–208, 210–247, and 251–292; these read TYENKIVTKLLALTADSANNVQENVVKCLGLLIKRVKD, LVIK…KYGS, GDLENIQKVVLPKLNATRPAIRKRAILCLANIAFPSPD, LFNSLLDYIIKSIEEAKKPDHISTLIQAIGAICKSSGY, and KYLP…KCQK. Residues 315-354 are disordered; that stretch reads YSDDGEGEEDGDEEEEEMETSGDNDEEQEEEEEEEDLSDD. HEAT repeat units lie at residues 382 to 419, 432 to 469, 603 to 641, 646 to 683, 688 to 725, 853 to 890, 933 to 966, 967 to 1004, and 1008 to 1045; these read ELYQKVAPVLYNRFKEREENVRLDIFTTFVLLLKQLNK, QQVPKLVQSISKSLIDKSIRTRVGAIALLKELVMIIPG, EIQSELQPCLSILLERLDNELTRVVTVKVLSRIINSSIN, SILPSAIKLLSTFLRKNNRVLKQSSLIALNDIVKVCPN, SLLTGILTEMATLINESDLQITHLAFVFIQNLLKNYSE, HENENLQESVYKTFEANNEEIKQVAALCLGDIAVCSLQ, PFLQSILPLLFDNCVNEEEGTRNIVAECLGKLSM, IEPNEIIPKLVEKIKSPSPLERSTIVTSIKFSIMENKE, and QYLAPNISQFLSLLHDGDLIVRRSALLSLNYIAHNKPN.

The protein belongs to the CAND family.

The protein resides in the nucleus. Functionally, key assembly factor of SCF (SKP1-CUL1-F-box protein) E3 ubiquitin ligase complexes that promotes the exchange of the substrate-recognition F-box subunit in SCF complexes, thereby playing a key role in the cellular repertoire of SCF complexes. Acts as a F-box protein exchange factor. This is Cullin-associated NEDD8-dissociated protein 1 (cand1) from Dictyostelium discoideum (Social amoeba).